Here is a 209-residue protein sequence, read N- to C-terminus: MEQQKIPQATAKRLPLYYRFIQNLSLSGKQRVSSAELSEAVKVDSATIRRDFSYFGALGKKGYGYNVNYLLSFFRETLDQDDITRVALIGVGNLGTAFLHYNFTKNNNTKIEMAFDVSEEKVGTEIGGIPVYHLDELEERLSTDIQVAILTVPATVAQSVADRLAETNVHGILNFTPARLNVSENIRIHHIDLAVELQTLVYFLKNYPQ.

Residues 16-55 constitute a DNA-binding region (H-T-H motif); it reads LYYRFIQNLSLSGKQRVSSAELSEAVKVDSATIRRDFSYF. 90-95 is an NAD(+) binding site; the sequence is GVGNLG.

This sequence belongs to the transcriptional regulatory Rex family. As to quaternary structure, homodimer.

It localises to the cytoplasm. Modulates transcription in response to changes in cellular NADH/NAD(+) redox state. In Bacillus cereus (strain ATCC 10987 / NRS 248), this protein is Redox-sensing transcriptional repressor Rex.